Consider the following 292-residue polypeptide: ATP synthase gamma chain (292 aa).

The protein belongs to the ATPase gamma chain family. F-type ATPases have 2 components, CF(1) - the catalytic core - and CF(0) - the membrane proton channel. CF(1) has five subunits: alpha(3), beta(3), gamma(1), delta(1), epsilon(1). CF(0) has three main subunits: a, b and c.

The protein localises to the cell inner membrane. Produces ATP from ADP in the presence of a proton gradient across the membrane. The gamma chain is believed to be important in regulating ATPase activity and the flow of protons through the CF(0) complex. In Maridesulfovibrio salexigens (strain ATCC 14822 / DSM 2638 / NCIMB 8403 / VKM B-1763) (Desulfovibrio salexigens), this protein is ATP synthase gamma chain.